Here is a 391-residue protein sequence, read N- to C-terminus: DNA-directed RNA polymerase subunit Rpo1C (391 aa).

The protein belongs to the RNA polymerase beta' chain family. As to quaternary structure, part of the RNA polymerase complex.

The protein resides in the cytoplasm. It carries out the reaction RNA(n) + a ribonucleoside 5'-triphosphate = RNA(n+1) + diphosphate. In terms of biological role, DNA-dependent RNA polymerase (RNAP) catalyzes the transcription of DNA into RNA using the four ribonucleoside triphosphates as substrates. Forms part of the jaw domain. This is DNA-directed RNA polymerase subunit Rpo1C from Thermococcus gammatolerans (strain DSM 15229 / JCM 11827 / EJ3).